A 588-amino-acid polypeptide reads, in one-letter code: Aspartate--tRNA ligase (588 aa).

An L-aspartate-binding site is contributed by Glu-172. The segment at 196 to 199 (QLFK) is aspartate. Arg-218 is a binding site for L-aspartate. ATP is bound by residues 218 to 220 (RDE) and Gln-227. L-aspartate is bound at residue His-449. Residue Glu-483 coordinates ATP. L-aspartate is bound at residue Arg-490. 535–538 (GLDR) contributes to the ATP binding site.

Belongs to the class-II aminoacyl-tRNA synthetase family. Type 1 subfamily. As to quaternary structure, homodimer.

The protein resides in the cytoplasm. It catalyses the reaction tRNA(Asp) + L-aspartate + ATP = L-aspartyl-tRNA(Asp) + AMP + diphosphate. Catalyzes the attachment of L-aspartate to tRNA(Asp) in a two-step reaction: L-aspartate is first activated by ATP to form Asp-AMP and then transferred to the acceptor end of tRNA(Asp). The polypeptide is Aspartate--tRNA ligase (Haemophilus influenzae (strain PittGG)).